The primary structure comprises 135 residues: Large ribosomal subunit protein uL16c (135 aa).

The protein belongs to the universal ribosomal protein uL16 family. Part of the 50S ribosomal subunit.

Its subcellular location is the plastid. It is found in the chloroplast. This is Large ribosomal subunit protein uL16c from Daucus carota (Wild carrot).